Consider the following 222-residue polypeptide: MAYDSNYTFPDPETSDKQGLLAIGGVLTPKRVLQAYSQGIFPWYEPGNPVLWWSPNPRLILIPNEFKISRSLKKTLKKPFKLTVDTAFQRVISYCATCSDRSNKTWITSEMIETYTQLHEMGYAHSFEIWDGSELVGGLYGISLGHAFFGESMFHTITDASKVALHFLCRIMQSWNFDFIDCQLPTLHLMSLGAKIISRKEFLHMLQETLKYPDKKGNWSID.

Belongs to the L/F-transferase family.

It localises to the cytoplasm. It catalyses the reaction N-terminal L-lysyl-[protein] + L-leucyl-tRNA(Leu) = N-terminal L-leucyl-L-lysyl-[protein] + tRNA(Leu) + H(+). The catalysed reaction is N-terminal L-arginyl-[protein] + L-leucyl-tRNA(Leu) = N-terminal L-leucyl-L-arginyl-[protein] + tRNA(Leu) + H(+). The enzyme catalyses L-phenylalanyl-tRNA(Phe) + an N-terminal L-alpha-aminoacyl-[protein] = an N-terminal L-phenylalanyl-L-alpha-aminoacyl-[protein] + tRNA(Phe). Its function is as follows. Functions in the N-end rule pathway of protein degradation where it conjugates Leu, Phe and, less efficiently, Met from aminoacyl-tRNAs to the N-termini of proteins containing an N-terminal arginine or lysine. The protein is Leucyl/phenylalanyl-tRNA--protein transferase of Legionella pneumophila (strain Corby).